The chain runs to 301 residues: Probable alpha-L-glutamate ligase (301 aa).

One can recognise an ATP-grasp domain in the interval 104–287 (LQLLSRRGIG…VAGMIIGYLE (184 aa)). ATP contacts are provided by residues K141, 178–179 (EY), D187, and 211–213 (RSN). Mg(2+)-binding residues include D248, E260, and N262. Mn(2+)-binding residues include D248, E260, and N262.

It belongs to the RimK family. It depends on Mg(2+) as a cofactor. Requires Mn(2+) as cofactor.

The protein is Probable alpha-L-glutamate ligase of Pseudomonas syringae pv. syringae (strain B728a).